The primary structure comprises 319 residues: Ribosomal RNA small subunit methyltransferase H (319 aa).

S-adenosyl-L-methionine is bound by residues 34 to 36 (GGH), Asp54, Phe83, Asp104, and Gln111.

Belongs to the methyltransferase superfamily. RsmH family.

Its subcellular location is the cytoplasm. The enzyme catalyses cytidine(1402) in 16S rRNA + S-adenosyl-L-methionine = N(4)-methylcytidine(1402) in 16S rRNA + S-adenosyl-L-homocysteine + H(+). Its function is as follows. Specifically methylates the N4 position of cytidine in position 1402 (C1402) of 16S rRNA. In Lactiplantibacillus plantarum (strain ATCC BAA-793 / NCIMB 8826 / WCFS1) (Lactobacillus plantarum), this protein is Ribosomal RNA small subunit methyltransferase H.